Reading from the N-terminus, the 488-residue chain is DELTA-alicitoxin-Pse2b (488 aa).

The N-terminal stretch at 1–21 (MSKPIIFLLTAFVVLTDLGAT) is a signal peptide. Residues 24-344 (TEKVEVKAKP…GYLNFDCAYE (321 aa)) enclose the MACPF domain. In terms of domain architecture, EGF-like spans 369–398 (VCKLGPEGCHSDDDCESDDLIYCACCGDSC). Intrachain disulfides connect Cys-370/Cys-383, Cys-377/Cys-391, and Cys-393/Cys-398.

It is found in the secreted. The protein resides in the nematocyst. Causes lethal toxicity to the shrimp Palaemon paucidence, and hemolytic activity toward sheep red blood cells. This Phyllodiscus semoni (Night anemone) protein is DELTA-alicitoxin-Pse2b.